The following is an 834-amino-acid chain: Leucine--tRNA ligase (834 aa).

Residues 36 to 46 (PYPSGKIHVGH) carry the 'HIGH' region motif. The 'KMSKS' region motif lies at 602 to 606 (KMSKS). Residue Lys-605 participates in ATP binding.

The protein belongs to the class-I aminoacyl-tRNA synthetase family.

The protein localises to the cytoplasm. The enzyme catalyses tRNA(Leu) + L-leucine + ATP = L-leucyl-tRNA(Leu) + AMP + diphosphate. The sequence is that of Leucine--tRNA ligase from Rickettsia canadensis (strain McKiel).